The following is a 417-amino-acid chain: MFSRDVRLETYDPELAKAIAAEAGRQEDHVELIASENYCSPLVMEAQGSQLTNKYAEGYPGKRYYGGCEFVDIAEQLAIERIKQVFGADYANVQPHSGSQANQAVYLALLQPGDTILGMSLAHGGHLTHGAKVNVSGKLFNAVQYGVNEQGLIDYDEVQRLATEHKPKMVVAGFSAYSQKIDWARFRAIADSVGAYLFVDMAHIAGLVAAGVYPSPMEHAHVVTSTTHKTLRGPRGGIIVAKGASEELQKKLQSIVFPGIQGGPLMHVIAAKAVAFKEALEPAFKTYQQQVVKNAQAMANTLIARGYKIVSGGTENHLMLVDMIGRDVSGKDAEAALGKAHITVNKNSVPNDPRSPFVTSGLRLGTPAITTRGYQEQDSIDLANWIADVLDAPTDEAVLAKVRDAVTAQCKRYPVYG.

(6S)-5,6,7,8-tetrahydrofolate-binding positions include L121 and 125 to 127 (GHL). K229 bears the N6-(pyridoxal phosphate)lysine mark. Residue 355–357 (SPF) participates in (6S)-5,6,7,8-tetrahydrofolate binding.

It belongs to the SHMT family. Homodimer. The cofactor is pyridoxal 5'-phosphate.

It is found in the cytoplasm. The enzyme catalyses (6R)-5,10-methylene-5,6,7,8-tetrahydrofolate + glycine + H2O = (6S)-5,6,7,8-tetrahydrofolate + L-serine. It participates in one-carbon metabolism; tetrahydrofolate interconversion. It functions in the pathway amino-acid biosynthesis; glycine biosynthesis; glycine from L-serine: step 1/1. In terms of biological role, catalyzes the reversible interconversion of serine and glycine with tetrahydrofolate (THF) serving as the one-carbon carrier. This reaction serves as the major source of one-carbon groups required for the biosynthesis of purines, thymidylate, methionine, and other important biomolecules. Also exhibits THF-independent aldolase activity toward beta-hydroxyamino acids, producing glycine and aldehydes, via a retro-aldol mechanism. The polypeptide is Serine hydroxymethyltransferase (Xanthomonas axonopodis pv. citri (strain 306)).